The primary structure comprises 852 residues: Eukaryotic translation initiation factor 3 subunit C (852 aa).

The tract at residues 1–90 is disordered; the sequence is MSRFFVSGYP…DSDSDDEGRK (90 aa). Over residues 14 to 57 the composition is skewed to acidic residues; it reads SSEEEDLLSSSEEELLSSESEEDNFSSDSEFGNDSDNDSSDSDS. The 176-residue stretch at 597 to 772 folds into the PCI domain; sequence FHMHINLELL…SFVNFTTNDH (176 aa). The segment covering 798-809 has biased composition (polar residues); sequence TASNGYSRKQPM. The segment at 798–852 is disordered; the sequence is TASNGYSRKQPMQQQQQQQQQQQQQKEQKELLHEENNRFRYANVNANNDEFQTTA. Low complexity predominate over residues 810 to 822; the sequence is QQQQQQQQQQQQQ. Residues 823–835 show a composition bias toward basic and acidic residues; sequence KEQKELLHEENNR. The span at 841-852 shows a compositional bias: polar residues; it reads VNANNDEFQTTA.

It belongs to the eIF-3 subunit C family. Component of the eukaryotic translation initiation factor 3 (eIF-3) complex.

The protein localises to the cytoplasm. In terms of biological role, component of the eukaryotic translation initiation factor 3 (eIF-3) complex, which is involved in protein synthesis of a specialized repertoire of mRNAs and, together with other initiation factors, stimulates binding of mRNA and methionyl-tRNAi to the 40S ribosome. The eIF-3 complex specifically targets and initiates translation of a subset of mRNAs involved in cell proliferation. The protein is Eukaryotic translation initiation factor 3 subunit C of Debaryomyces hansenii (strain ATCC 36239 / CBS 767 / BCRC 21394 / JCM 1990 / NBRC 0083 / IGC 2968) (Yeast).